Reading from the N-terminus, the 285-residue chain is MPAQKIDGKLIAQQVRQHVKSHVESIVSSGKRPPGLAVVLVGSDAASHVYVTNKRRACEEVGFVSKSYDLPSTTSQQKLLELIDTLNADEEIDGILVQLPLPAGLDKEQVLERILPHKDVDGFHPYNIGRLAQRIPALRPCTPKGIMTLIESTKRPIKGLDAVIVGASNIVGRPMFMELLLAGCTVTSCHKFTKDLQSHVERADLIVVAVGISAFIPGEWIKPGAIVIDVGINRQTDGTLIGDVDYATAEKRAGWITPVPGGVGPMTVASLIENTLEAYVKYHSN.

Residues 166–168 (GAS) and isoleucine 232 contribute to the NADP(+) site.

The protein belongs to the tetrahydrofolate dehydrogenase/cyclohydrolase family. Homodimer.

It catalyses the reaction (6R)-5,10-methylene-5,6,7,8-tetrahydrofolate + NADP(+) = (6R)-5,10-methenyltetrahydrofolate + NADPH. The enzyme catalyses (6R)-5,10-methenyltetrahydrofolate + H2O = (6R)-10-formyltetrahydrofolate + H(+). The protein operates within one-carbon metabolism; tetrahydrofolate interconversion. Functionally, catalyzes the oxidation of 5,10-methylenetetrahydrofolate to 5,10-methenyltetrahydrofolate and then the hydrolysis of 5,10-methenyltetrahydrofolate to 10-formyltetrahydrofolate. In Pseudoalteromonas atlantica (strain T6c / ATCC BAA-1087), this protein is Bifunctional protein FolD.